The sequence spans 238 residues: Glyceraldehyde 3-phosphate phosphatase (238 aa).

Belongs to the HAD-like hydrolase superfamily. Mg(2+) is required as a cofactor.

Its function is as follows. Catalyzes the dephosphorylation of D,L-glyceraldehyde 3-phosphate in vitro. The polypeptide is Glyceraldehyde 3-phosphate phosphatase (Pyrococcus abyssi (strain GE5 / Orsay)).